Reading from the N-terminus, the 341-residue chain is Spore photoproduct lyase (341 aa).

The 229-residue stretch at 76–304 (SKPSAEYAIP…ESKRKYKWGR (229 aa)) folds into the Radical SAM core domain. Cysteine 90, cysteine 94, and cysteine 97 together coordinate [4Fe-4S] cluster. A DNA-binding region (H-T-H motif) is located at residues 217 to 234 (QAARKVAGAGYKLGFVVA).

Belongs to the radical SAM superfamily. SPL family. As to quaternary structure, monomer or homodimer. The cofactor is [4Fe-4S] cluster. S-adenosyl-L-methionine is required as a cofactor.

The enzyme catalyses (5R)-5,6-dihydro-5-(thymidin-7-yl)thymidine in DNA = a thymidine dimer in DNA. Functionally, involved in repair of UV radiation-induced DNA damage during spore germination. Can repair thymine dimer 5-thyminyl-5,6-dihydrothymine (known as spore photoproduct (SP)) by in situ monomerization of SP to two thymines. The sequence is that of Spore photoproduct lyase (splG) from Geobacillus sp. (strain Y412MC61).